A 454-amino-acid polypeptide reads, in one-letter code: MIDEVRELGIYTAYNANVDAIVNLNAEIIQRLIEEFGPDKIKRRLEEYPREINEPLDFVARLVHALKTGKPMAVPLVNEELHQWFDKTFKYDTERIGGQAGIIANILVGLKVKKVIAYTPFLPKRLAELFKEGILYPVVEEDKLVLKPIQSAYREGDPLKVNRIFEFRKGTRFKLGDEVIEVPHSGRFIVSSRFESISRIETKDELRKFLPEIGEMVDGAILSGYQGIRLQYSDGKDANYYLRRAKEDIRLLKKNKDIKIHVEFASIQDRRLRKKVVNNIFPMVDSVGMDEAEIAYILSVLGYSDLADRIFMYNRIEDAILGGMIILDELNFEILQVHTIYYLMYITHRDNPLSEEELMRSLDFGTILAATRASLGDINDPRDVKVGMSVPYNERSEYIKLRFEEAKRKLRLKEYKVVIVPTRLVPNPVSTVGLGDTISTGTFLSYLSLLRRHQ.

The ADPK domain occupies 1-452; sequence MIDEVRELGI…FLSYLSLLRR (452 aa). Mg(2+)-binding residues include glutamate 263, glutamate 293, and aspartate 436. Aspartate 436 (proton acceptor) is an active-site residue.

It belongs to the carbohydrate kinase PfkC family. In terms of assembly, homotetramer. The cofactor is Mg(2+).

The protein localises to the cytoplasm. The catalysed reaction is beta-D-fructose 6-phosphate + ADP = beta-D-fructose 1,6-bisphosphate + AMP + H(+). It participates in carbohydrate degradation; glycolysis. With respect to regulation, inhibited by AMP and ATP. In terms of biological role, catalyzes the phosphorylation of fructose 6-phosphate to fructose 1,6-bisphosphate using ADP as the phosphate donor. As a phosphoryl group donor, ADP can be replaced by GDP, ATP, and GTP to a limited extent. This Pyrococcus furiosus (strain ATCC 43587 / DSM 3638 / JCM 8422 / Vc1) protein is ADP-specific phosphofructokinase (pfkC).